The primary structure comprises 336 residues: Foldase protein PrsA (336 aa).

A signal peptide spans 1-22 (MKSAKKLLSVLCLGIFILTFTA). A lipid anchor (N-palmitoyl cysteine) is attached at Cys23. Cys23 carries S-diacylglycerol cysteine lipidation. A PpiC domain is found at 194 to 286 (PNTMNVSHIL…WGYHIIKINS (93 aa)).

It belongs to the PrsA family.

It localises to the cell membrane. The enzyme catalyses [protein]-peptidylproline (omega=180) = [protein]-peptidylproline (omega=0). Functionally, plays a major role in protein secretion by helping the post-translocational extracellular folding of several secreted proteins. The chain is Foldase protein PrsA from Clostridium botulinum (strain Langeland / NCTC 10281 / Type F).